Reading from the N-terminus, the 158-residue chain is Serine-protein kinase RsbW (158 aa).

Belongs to the anti-sigma-factor family.

The catalysed reaction is L-seryl-[protein] + ATP = O-phospho-L-seryl-[protein] + ADP + H(+). It catalyses the reaction L-threonyl-[protein] + ATP = O-phospho-L-threonyl-[protein] + ADP + H(+). Its function is as follows. Negative regulator of sigma-B activity. Phosphorylates and inactivates its specific antagonist protein, RsbV. Upon phosphorylation of RsbV, RsbW is released and binds to sigma-B, thereby blocking its ability to form an RNA polymerase holoenzyme (E-sigma-B). The protein is Serine-protein kinase RsbW of Oceanobacillus iheyensis (strain DSM 14371 / CIP 107618 / JCM 11309 / KCTC 3954 / HTE831).